The following is a 361-amino-acid chain: Free fatty acid receptor 4 (361 aa).

The segment at 1–21 (MSPECAQTTGPGPSRTPDQVN) is disordered. Topologically, residues 1-45 (MSPECAQTTGPGPSRTPDQVNRTHFPFFSDVKGDHRLVLSVLETT) are extracellular. N-linked (GlcNAc...) asparagine glycosylation occurs at Asn21. A helical membrane pass occupies residues 46-66 (VLGLIFVVSLLGNVCALVLVV). Topologically, residues 67 to 77 (RRRRRGATVSL) are cytoplasmic. A helical membrane pass occupies residues 78-98 (VLNLFCADLLFTSAIPLVLVV). The Extracellular segment spans residues 99–103 (RWTEA). A helical membrane pass occupies residues 104 to 124 (WLLGPVVCHLLFYVMTMSGSV). Cysteines 111 and 194 form a disulfide. Residues 125 to 156 (TILTLAAVSLERMVCIVRLRRGLSGPGRRTQA) lie on the Cytoplasmic side of the membrane. Residues 157-177 (ALLAFIWGYSALAALPLCILF) traverse the membrane as a helical segment. Residues 178 to 204 (RVVPQRLPGGDQEIPICTLDWPNRIGE) are Extracellular-facing. A helical transmembrane segment spans residues 205-225 (ISWDVFFVTLNFLVPGLVIVI). Residues 226-268 (SYSKILQITKASRKRLTLSLAYSESHQIRVSQQDYRLFRTLFL) are Cytoplasmic-facing. A helical membrane pass occupies residues 269–289 (LMVSFFIMWSPIIITILLILI). The Extracellular segment spans residues 290–295 (QNFRQD). A helical membrane pass occupies residues 296–316 (LVIWPSLFFWVVAFTFANSAL). The Cytoplasmic segment spans residues 317–361 (NPILYNMSLFRSEWRKIFCCFFFPEKGAIFTETSIRRNDLSVIST). 2 positions are modified to phosphothreonine: Thr347 and Thr349. 3 positions are modified to phosphoserine: Ser350, Ser357, and Ser360.

The protein belongs to the G-protein coupled receptor 1 family. Interacts (via C-terminus) with ARRB2 following LCFAs stimulation. Post-translationally, phosphorylated at two clusters of Ser and Thr residues located in the intracellular C-terminus. Prerequisite for FFAR4 internalization via an ARRB2-dependent pathway.

The protein resides in the cell membrane. The protein localises to the endosome membrane. Its subcellular location is the lysosome membrane. It localises to the cell projection. It is found in the cilium membrane. G-protein-coupled receptor for long-chain fatty acids (LCFAs) with a major role in adipogenesis, energy metabolism and inflammation. Signals via G-protein and beta-arrestin pathways. LCFAs sensing initiates activation of phosphoinositidase C-linked G proteins GNAQ and GNA11 (G(q)/G(11)), inducing a variety of cellular responses via second messenger pathways such as intracellular calcium mobilization, modulation of cyclic adenosine monophosphate (cAMP) production, and mitogen-activated protein kinases (MAPKs). After LCFAs binding, associates with beta-arrestin ARRB2 that acts as an adapter protein coupling the receptor to specific downstream signaling pathways, as well as mediating receptor endocytosis. In response to dietary fats, plays an important role in the regulation of adipocyte proliferation and differentiation. Acts as a receptor for omega-3 polyunsaturated fatty acids (PUFAs) at primary cilium of perivascular preadipocytes, initiating an adipogenic program via cAMP and CTCF-dependent chromatin remodeling that ultimately results in transcriptional activation of adipogenic genes and cell cycle entry. Induces differentiation of brown and beige adipocytes probably via autocrine and endocrine functions of FGF21 hormone. Contributes to the thermogenic activation of brown adipose tissue and the browning of white adipose tissue. Activates brown adipocytes by initiating intracellular calcium signaling leading to mitochondrial depolarization and fission, and overall increased mitochondrial respiration. Consequently stimulates fatty acid uptake and oxidation in mitochondria together with UCP1-mediated thermogenic respiration, eventually reducing fat mass. Regulates bi-potential differentiation of bone marrow mesenchymal stem cells toward osteoblasts or adipocytes likely by up-regulating distinct integrins. In response to dietary fats regulates hormone secretion and appetite. Stimulates GIP and GLP1 secretion from enteroendocrine cells as well as GCG secretion in pancreatic alpha cells, thereby playing a role in the regulation of blood glucose levels. Negatively regulates glucose-induced SST secretion in pancreatic delta cells. Mediates LCFAs inhibition of GHRL secretion, an appetite-controlling hormone. In taste buds, contributes to sensing of dietary fatty acids by the gustatory system. During the inflammatory response, promotes anti-inflammatory M2 macrophage differentiation in adipose tissue. Mediates the anti-inflammatory effects of omega-3 PUFAs via inhibition of NLRP3 inflammasome activation. In this pathway, interacts with adapter protein ARRB2 and inhibits the priming step triggered by Toll-like receptors (TLRs) at the level of TAK1 and TAB1. Further inhibits the activation step when ARRB2 directly associates with NLRP3, leading to inhibition of pro-inflammatory cytokine release. Mediates LCFAs anti-apoptotic effects. This Rattus norvegicus (Rat) protein is Free fatty acid receptor 4 (Ffar4).